Consider the following 344-residue polypeptide: NADH-quinone oxidoreductase subunit H 2 (344 aa).

Helical transmembrane passes span 13 to 33 (LPIL…VAWL), 82 to 102 (ILFL…WAVI), 116 to 136 (ALLY…LAGW), 161 to 181 (MGFA…GEIV), 188 to 208 (FWHW…ISGV), 240 to 260 (LFFL…ALMF), 280 to 300 (VPGI…YLWF), and 319 to 339 (VFIP…VAQL).

The protein belongs to the complex I subunit 1 family. NDH-1 is composed of 14 different subunits. Subunits NuoA, H, J, K, L, M, N constitute the membrane sector of the complex.

It is found in the cell inner membrane. The enzyme catalyses a quinone + NADH + 5 H(+)(in) = a quinol + NAD(+) + 4 H(+)(out). Functionally, NDH-1 shuttles electrons from NADH, via FMN and iron-sulfur (Fe-S) centers, to quinones in the respiratory chain. The immediate electron acceptor for the enzyme in this species is believed to be ubiquinone. Couples the redox reaction to proton translocation (for every two electrons transferred, four hydrogen ions are translocated across the cytoplasmic membrane), and thus conserves the redox energy in a proton gradient. This subunit may bind ubiquinone. The sequence is that of NADH-quinone oxidoreductase subunit H 2 from Nitrosococcus oceani (strain ATCC 19707 / BCRC 17464 / JCM 30415 / NCIMB 11848 / C-107).